The primary structure comprises 543 residues: Chaperonin GroEL (543 aa).

ATP-binding positions include 29 to 32, K50, 86 to 90, G415, and D495; these read TLGP and DGTTT.

This sequence belongs to the chaperonin (HSP60) family. As to quaternary structure, forms a cylinder of 14 subunits composed of two heptameric rings stacked back-to-back. Interacts with the co-chaperonin GroES.

Its subcellular location is the cytoplasm. The catalysed reaction is ATP + H2O + a folded polypeptide = ADP + phosphate + an unfolded polypeptide.. Functionally, together with its co-chaperonin GroES, plays an essential role in assisting protein folding. The GroEL-GroES system forms a nano-cage that allows encapsulation of the non-native substrate proteins and provides a physical environment optimized to promote and accelerate protein folding. This chain is Chaperonin GroEL, found in Flavobacterium johnsoniae (strain ATCC 17061 / DSM 2064 / JCM 8514 / BCRC 14874 / CCUG 350202 / NBRC 14942 / NCIMB 11054 / UW101) (Cytophaga johnsonae).